A 512-amino-acid polypeptide reads, in one-letter code: ATP synthase subunit alpha (512 aa).

169-176 (GDRQTGKT) contacts ATP.

Belongs to the ATPase alpha/beta chains family. As to quaternary structure, F-type ATPases have 2 components, CF(1) - the catalytic core - and CF(0) - the membrane proton channel. CF(1) has five subunits: alpha(3), beta(3), gamma(1), delta(1), epsilon(1). CF(0) has three main subunits: a(1), b(2) and c(9-12). The alpha and beta chains form an alternating ring which encloses part of the gamma chain. CF(1) is attached to CF(0) by a central stalk formed by the gamma and epsilon chains, while a peripheral stalk is formed by the delta and b chains.

It is found in the cell inner membrane. It catalyses the reaction ATP + H2O + 4 H(+)(in) = ADP + phosphate + 5 H(+)(out). Produces ATP from ADP in the presence of a proton gradient across the membrane. The alpha chain is a regulatory subunit. The polypeptide is ATP synthase subunit alpha (Azoarcus sp. (strain BH72)).